Consider the following 179-residue polypeptide: Pyridoxal 5'-phosphate synthase subunit PdxT (179 aa).

Glycine 48–serine 50 contributes to the L-glutamine binding site. Cysteine 79 serves as the catalytic Nucleophile. L-glutamine-binding positions include arginine 101 and isoleucine 127–arginine 128. Residues histidine 163 and glutamate 165 each act as charge relay system in the active site.

Belongs to the glutaminase PdxT/SNO family. In the presence of PdxS, forms a dodecamer of heterodimers. Only shows activity in the heterodimer.

It carries out the reaction aldehydo-D-ribose 5-phosphate + D-glyceraldehyde 3-phosphate + L-glutamine = pyridoxal 5'-phosphate + L-glutamate + phosphate + 3 H2O + H(+). The enzyme catalyses L-glutamine + H2O = L-glutamate + NH4(+). It functions in the pathway cofactor biosynthesis; pyridoxal 5'-phosphate biosynthesis. Functionally, catalyzes the hydrolysis of glutamine to glutamate and ammonia as part of the biosynthesis of pyridoxal 5'-phosphate. The resulting ammonia molecule is channeled to the active site of PdxS. The chain is Pyridoxal 5'-phosphate synthase subunit PdxT from Francisella tularensis subsp. holarctica (strain FTNF002-00 / FTA).